We begin with the raw amino-acid sequence, 142 residues long: Large ribosomal subunit protein uL13 (142 aa).

This sequence belongs to the universal ribosomal protein uL13 family. As to quaternary structure, part of the 50S ribosomal subunit.

In terms of biological role, this protein is one of the early assembly proteins of the 50S ribosomal subunit, although it is not seen to bind rRNA by itself. It is important during the early stages of 50S assembly. This Alkalilimnicola ehrlichii (strain ATCC BAA-1101 / DSM 17681 / MLHE-1) protein is Large ribosomal subunit protein uL13.